A 168-amino-acid chain; its full sequence is Ribosome-binding factor A (168 aa).

Positions 122–136 (VRRDARPAGDDDPYR) are enriched in basic and acidic residues. Residues 122-168 (VRRDARPAGDDDPYRRPRPAAGEVDELSEVDELSEVDEYGGTARQEG) are disordered. Residues 144–159 (EVDELSEVDELSEVDE) are compositionally biased toward acidic residues.

This sequence belongs to the RbfA family. As to quaternary structure, monomer. Binds 30S ribosomal subunits, but not 50S ribosomal subunits or 70S ribosomes.

It localises to the cytoplasm. Its function is as follows. One of several proteins that assist in the late maturation steps of the functional core of the 30S ribosomal subunit. Associates with free 30S ribosomal subunits (but not with 30S subunits that are part of 70S ribosomes or polysomes). Required for efficient processing of 16S rRNA. May interact with the 5'-terminal helix region of 16S rRNA. The chain is Ribosome-binding factor A from Frankia casuarinae (strain DSM 45818 / CECT 9043 / HFP020203 / CcI3).